Consider the following 160-residue polypeptide: Transcription elongation factor GreA (160 aa).

The stretch at 1–72 forms a coiled coil; that stretch reads MAEKTYPMTL…QISSLETKIR (72 aa).

This sequence belongs to the GreA/GreB family.

Functionally, necessary for efficient RNA polymerase transcription elongation past template-encoded arresting sites. The arresting sites in DNA have the property of trapping a certain fraction of elongating RNA polymerases that pass through, resulting in locked ternary complexes. Cleavage of the nascent transcript by cleavage factors such as GreA or GreB allows the resumption of elongation from the new 3'terminus. GreA releases sequences of 2 to 3 nucleotides. The polypeptide is Transcription elongation factor GreA (Streptococcus pneumoniae serotype 4 (strain ATCC BAA-334 / TIGR4)).